Here is a 404-residue protein sequence, read N- to C-terminus: Magnesium transporter NIPA4 (404 aa).

Residues 1-55 are Extracellular-facing; it reads MELRVSNTSCENGSLLHLYCSSQEVLCQIVNDLSPEVPSNATFHSWQERIRQNYG. 3 N-linked (GlcNAc...) asparagine glycosylation sites follow: Asn7, Asn12, and Asn40. A helical membrane pass occupies residues 56–76; that stretch reads FYIGLGLAFLSSFLIGSSVIL. Residues 77-102 lie on the Cytoplasmic side of the membrane; the sequence is KKKGLLRLVATGATRAVDGGFGYLKD. Residues 103–123 traverse the membrane as a helical segment; the sequence is AMWWAGFLTMAAGEVANFGAY. A topological domain (extracellular) is located at residue Ala124. A helical membrane pass occupies residues 125–145; sequence FAPATVVTPLGALSVLISAIL. The Cytoplasmic segment spans residues 146–153; sequence SSYFLRES. A helical transmembrane segment spans residues 154 to 174; it reads LNLLGKLGCVICVAGSTVMVI. Over 175–195 the chain is Extracellular; that stretch reads HAPEEEKVTTIMEMASKMKDT. A helical transmembrane segment spans residues 196 to 216; it reads GFIVFAVLLLVSCLILIFVIA. The Cytoplasmic portion of the chain corresponds to 217 to 223; the sequence is PRYGQRN. The chain crosses the membrane as a helical span at residues 224–244; it reads ILIYIIICSVIGAFSVAAVKG. At 245-261 the chain is on the extracellular side; it reads LGITIKNFFQGLPVVRH. The chain crosses the membrane as a helical span at residues 262–282; that stretch reads PLPYILSLILALSLSTQVNFL. The Cytoplasmic portion of the chain corresponds to 283–293; it reads NRALDIFNTSL. Residues 294-314 traverse the membrane as a helical segment; it reads VFPIYYVFFTTVVVTSSIILF. Residues 315 to 324 are Extracellular-facing; the sequence is KEWYSMSAVD. A helical membrane pass occupies residues 325–345; it reads IAGTLSGFVTIILGVFMLHAF. Over 346–404 the chain is Cytoplasmic; sequence KDLDISCASLPHMHKNPPPSPAPEPTVIRLEDKNVLVDNIELASTSSPEEKPKVFIIHS.

Belongs to the NIPA family. In terms of tissue distribution, highly expressed in brain, lung, stomach, keratinocytes and leukocytes, and in all other tissues tested except liver, thyroid and fetal brain.

The protein resides in the cell membrane. The enzyme catalyses Mg(2+)(in) = Mg(2+)(out). In terms of biological role, acts as a Mg(2+) transporter. Can also transport other divalent cations such as Ba(2+), Sr(2+) and Fe(2+) but to a much less extent than Mg(2+). May be a receptor for ligands (trioxilins A3 and B3) from the hepoxilin pathway. The sequence is that of Magnesium transporter NIPA4 (NIPAL4) from Homo sapiens (Human).